A 364-amino-acid chain; its full sequence is Aminomethyltransferase (364 aa).

This sequence belongs to the GcvT family. The glycine cleavage system is composed of four proteins: P, T, L and H.

The catalysed reaction is N(6)-[(R)-S(8)-aminomethyldihydrolipoyl]-L-lysyl-[protein] + (6S)-5,6,7,8-tetrahydrofolate = N(6)-[(R)-dihydrolipoyl]-L-lysyl-[protein] + (6R)-5,10-methylene-5,6,7,8-tetrahydrofolate + NH4(+). In terms of biological role, the glycine cleavage system catalyzes the degradation of glycine. The sequence is that of Aminomethyltransferase from Salmonella dublin (strain CT_02021853).